Here is a 146-residue protein sequence, read N- to C-terminus: uncharacterized protein (146 aa).

5 consecutive transmembrane segments (helical) span residues 5 to 27 (GAMV…YGLA), 32 to 49 (FVYV…YIIL), 61 to 80 (LAVM…FFSG), 90 to 108 (SLGL…ARVF), and 120 to 142 (FFLK…MLFL).

Its subcellular location is the cell membrane. This is an uncharacterized protein from Archaeoglobus fulgidus (strain ATCC 49558 / DSM 4304 / JCM 9628 / NBRC 100126 / VC-16).